The following is a 383-amino-acid chain: Protein FAM217B (383 aa).

6 disordered regions span residues 1–70 (MNAG…CQGA), 89–115 (ADED…PPDL), 200–222 (KAKG…KSPG), 232–251 (SKPL…RKKA), 284–325 (QTLE…HIRV), and 338–383 (SCKA…YKLK). Polar residues predominate over residues 8 to 43 (NKVQHSKNSSGKRQSKSQVPHASSQPRSSLTAVTQP). Residues 44–56 (TEEKLKESISPEA) show a composition bias toward basic and acidic residues. The segment covering 374-383 (GVKQNTYKLK) has biased composition (polar residues).

The protein belongs to the FAM217 family.

The chain is Protein FAM217B (FAM217B) from Homo sapiens (Human).